Reading from the N-terminus, the 500-residue chain is ERAD-associated E3 ubiquitin-protein ligase HRD1 (500 aa).

The Cytoplasmic segment spans residues 1–3 (MIR). Residues 4-24 (LQTYAAFSLMATATAVYYAFS) form a helical membrane-spanning segment. The Lumenal portion of the chain corresponds to 25–40 (SREQFYPAMVYLSTSK). The helical transmembrane segment at 41–61 (ICFVLLLNTGLVAMCVAWQLV) threads the bilayer. At 62–98 (KRLFLGTLREAEVERLNEQAWREVVEILFAVTIFRQD) the chain is on the cytoplasmic side. The chain crosses the membrane as a helical span at residues 99–119 (FSVSFLAMVAALLLVKALHWL). Topologically, residues 120–135 (AQKRVEYIETTPSVPM) are lumenal. A helical membrane pass occupies residues 136-156 (LSHARIVSFMLFLLVVDCLFL). The Cytoplasmic segment spans residues 157–170 (SNSLRSLIHKREAS). A helical membrane pass occupies residues 171–191 (VAIFFSFEYMILATSTVSTFV). Residues 192–225 (KYIFYVSDMLMEGQWEKKAVYTFYLELISDLVHL) lie on the Lumenal side of the membrane. The chain crosses the membrane as a helical span at residues 226–246 (SLYMLFFIAIFLNYGVPLHLI). The Cytoplasmic portion of the chain corresponds to 247–500 (RELYETFRNF…NENGEHTKSD (254 aa)). The RING-type; atypical zinc finger occupies 292–330 (CIICREEMTTAKKLLCGHLFHVHCLRSWLERQHTCPTCR). 2 disordered regions span residues 337–375 (DNGR…SRRQ) and 398–438 (NNLN…SAPT). A compositionally biased stretch (low complexity) spans 348–358 (VHPGVQPVPGN). The span at 398 to 426 (NNLNRYSTPPQSTSNGPQSGEASTSNQSP) shows a compositional bias: polar residues.

This sequence belongs to the HRD1 family.

The protein localises to the endoplasmic reticulum membrane. The enzyme catalyses S-ubiquitinyl-[E2 ubiquitin-conjugating enzyme]-L-cysteine + [acceptor protein]-L-lysine = [E2 ubiquitin-conjugating enzyme]-L-cysteine + N(6)-ubiquitinyl-[acceptor protein]-L-lysine.. The protein operates within protein modification; protein ubiquitination. Probable component of the HRD1 ubiquitin ligase complex that mediates the rapid degradation of misfolded endoplasmic reticulum (ER) proteins, a process called ER-associated degradation (ERAD). This is ERAD-associated E3 ubiquitin-protein ligase HRD1 from Oryza sativa subsp. japonica (Rice).